We begin with the raw amino-acid sequence, 336 residues long: Dihydroorotate dehydrogenase (quinone) (336 aa).

FMN is bound by residues 62–66 and Thr-86; that span reads AGLDK. Substrate is bound at residue Lys-66. 111 to 115 is a binding site for substrate; sequence NRMGF. Positions 139 and 172 each coordinate FMN. Asn-172 serves as a coordination point for substrate. The Nucleophile role is filled by Ser-175. Asn-177 contacts substrate. FMN-binding residues include Lys-217 and Thr-245. Substrate is bound at residue 246–247; it reads NT. Residues Gly-268, Gly-297, and 318-319 each bind FMN; that span reads YS.

It belongs to the dihydroorotate dehydrogenase family. Type 2 subfamily. In terms of assembly, monomer. It depends on FMN as a cofactor.

It is found in the cell membrane. The enzyme catalyses (S)-dihydroorotate + a quinone = orotate + a quinol. Its pathway is pyrimidine metabolism; UMP biosynthesis via de novo pathway; orotate from (S)-dihydroorotate (quinone route): step 1/1. In terms of biological role, catalyzes the conversion of dihydroorotate to orotate with quinone as electron acceptor. This Vibrio vulnificus (strain YJ016) protein is Dihydroorotate dehydrogenase (quinone).